We begin with the raw amino-acid sequence, 32 residues long: Acatoxin 1 (32 aa).

Disulfide bonds link Cys1/Cys15, Cys8/Cys20, and Cys14/Cys26.

It localises to the secreted. It is found in the nematocyst. Reversibly inhibits acid-sensing ion channels (ASIC) in rat dorsal root ganglia neurons. Reversibly inhibits voltage-gated potassium channels (Kv) in rat DRG neurons. This is Acatoxin 1 from Anthopleura cascaia (Sea anemone).